The following is a 442-amino-acid chain: tRNA-2-methylthio-N(6)-dimethylallyladenosine synthase (442 aa).

The MTTase N-terminal domain occupies 2 to 120 (KKVFIRTFGC…LPKMIVDKET (119 aa)). Positions 11, 49, 83, 157, 161, and 164 each coordinate [4Fe-4S] cluster. The 233-residue stretch at 143 to 375 (RVEGGAAFVS…NEVIEAETAR (233 aa)) folds into the Radical SAM core domain. One can recognise a TRAM domain in the interval 378 to 441 (QTMVGTVQRC…TFSLRGKVVE (64 aa)).

The protein belongs to the methylthiotransferase family. MiaB subfamily. As to quaternary structure, monomer. [4Fe-4S] cluster serves as cofactor.

The protein resides in the cytoplasm. The catalysed reaction is N(6)-dimethylallyladenosine(37) in tRNA + (sulfur carrier)-SH + AH2 + 2 S-adenosyl-L-methionine = 2-methylsulfanyl-N(6)-dimethylallyladenosine(37) in tRNA + (sulfur carrier)-H + 5'-deoxyadenosine + L-methionine + A + S-adenosyl-L-homocysteine + 2 H(+). Catalyzes the methylthiolation of N6-(dimethylallyl)adenosine (i(6)A), leading to the formation of 2-methylthio-N6-(dimethylallyl)adenosine (ms(2)i(6)A) at position 37 in tRNAs that read codons beginning with uridine. The chain is tRNA-2-methylthio-N(6)-dimethylallyladenosine synthase from Neisseria meningitidis serogroup B (strain ATCC BAA-335 / MC58).